The following is a 340-amino-acid chain: Methionine import ATP-binding protein MetN 2 (340 aa).

The ABC transporter domain occupies 5 to 244 (VRFESVTKTF…PQAPASKSFV (240 aa)). Residue 41 to 48 (GYSGAGKS) participates in ATP binding.

This sequence belongs to the ABC transporter superfamily. Methionine importer (TC 3.A.1.24) family. In terms of assembly, the complex is composed of two ATP-binding proteins (MetN), two transmembrane proteins (MetI) and a solute-binding protein (MetQ).

It localises to the cell membrane. The enzyme catalyses L-methionine(out) + ATP + H2O = L-methionine(in) + ADP + phosphate + H(+). It carries out the reaction D-methionine(out) + ATP + H2O = D-methionine(in) + ADP + phosphate + H(+). In terms of biological role, part of the ABC transporter complex MetNIQ involved in methionine import. Responsible for energy coupling to the transport system. The chain is Methionine import ATP-binding protein MetN 2 from Rhodococcus jostii (strain RHA1).